The primary structure comprises 615 residues: Ectoine/glycine betaine/proline transporter EctP (615 aa).

A run of 12 helical transmembrane segments spans residues 24–44, 62–82, 102–122, 156–176, 207–227, 240–260, 275–295, 329–349, 360–380, 417–437, 463–483, and 489–509; these read FIFSISVGFIVVFVIATIALG, LGWMYIGGVSLVFIFLMGIFA, IVWFCMLFAGGVGAVLMFWGV, FGIHMWVIMALPGLSLGYFIY, LAIVGTTFGIAVSVGLGVLQI, VSWVQLLIILIITAVACISVA, IAMAVALMFFILFTGPTLTLL, WTVFYWAWTICWSPYVGMFVA, FIGGVLALPAIFGVVWFSIFG, LTGIVSAFALVIIVIFFITSI, WACTIGAVAGSLLIISPSSGI, and VVIIVAFPFFLVQFVMMFSLL. Disordered stretches follow at residues 524–562 and 589–615; these read TRQWEKTDTPEKLEEHSSQPAPGYDDEGNPLPMPALEHD and PEEAQEMGSRFKIVEQTRPQSRDEYDI. Basic and acidic residues-rich tracts occupy residues 526 to 540 and 600 to 615; these read QWEKTDTPEKLEEHS and KIVEQTRPQSRDEYDI.

Belongs to the BCCT transporter (TC 2.A.15) family.

The protein resides in the cell membrane. Involved in the uptake of osmoprotectants. Can transport ectoine, proline and glycine betaine. Na(+) is probably the coupling ion. The chain is Ectoine/glycine betaine/proline transporter EctP from Corynebacterium glutamicum (strain ATCC 13032 / DSM 20300 / JCM 1318 / BCRC 11384 / CCUG 27702 / LMG 3730 / NBRC 12168 / NCIMB 10025 / NRRL B-2784 / 534).